The following is a 612-amino-acid chain: Glutamine--fructose-6-phosphate aminotransferase [isomerizing] (612 aa).

Catalysis depends on cysteine 2, which acts as the Nucleophile; for GATase activity. Residues 2–220 (CGIVGAIRAH…DGDIALLASD (219 aa)) form the Glutamine amidotransferase type-2 domain. 2 consecutive SIS domains span residues 288 to 428 (AKSV…VRGL) and 461 to 602 (WAQQ…VDKP). Lysine 607 acts as the For Fru-6P isomerization activity in catalysis.

As to quaternary structure, homodimer.

It localises to the cytoplasm. It carries out the reaction D-fructose 6-phosphate + L-glutamine = D-glucosamine 6-phosphate + L-glutamate. In terms of biological role, catalyzes the first step in hexosamine metabolism, converting fructose-6P into glucosamine-6P using glutamine as a nitrogen source. This chain is Glutamine--fructose-6-phosphate aminotransferase [isomerizing], found in Neisseria meningitidis serogroup B (strain ATCC BAA-335 / MC58).